A 448-amino-acid chain; its full sequence is U1 small nuclear ribonucleoprotein 70 kDa (448 aa).

Residues 91–201 (TEIKNATEDP…GGGLGGTRRG (111 aa)) are required for interaction with U1 RNA. The 79-residue stretch at 102–180 (RTLFIARINY…KRVLVDVERA (79 aa)) folds into the RRM domain. A disordered region spans residues 188 to 448 (PRRLGGGLGG…SSGDPSWWRQ (261 aa)). Positions 191-200 (LGGGLGGTRR) are enriched in gly residues. Basic and acidic residues-rich tracts occupy residues 206-234 (NIKH…REGP) and 262-272 (ERRDRERDRGR). Over residues 281 to 293 (SRSRSRERRKRRA) the composition is skewed to basic residues. Basic and acidic residues-rich tracts occupy residues 294–320 (GSRE…DRER) and 346–376 (RDRE…IKEE). Positions 405 to 425 (RPPPAHHNMFSVPPPPILGRG) are mediates binding to Psi. The span at 426–448 (NASTNPNPDNGQQSSGDPSWWRQ) shows a compositional bias: polar residues.

As to quaternary structure, component of the U1 snRNP. Interacts with Psi; essential for alternative splicing of P-element transposase. Interacts with the SMN complex.

It is found in the nucleus speckle. It localises to the nucleus. The protein resides in the nucleoplasm. Functionally, mediates the splicing of pre-mRNA by binding to the stem loop I region of U1-snRNA. Required during oogenesis for nurse cell chromatin dispersal. The protein is U1 small nuclear ribonucleoprotein 70 kDa (snRNP-U1-70K) of Drosophila melanogaster (Fruit fly).